The chain runs to 286 residues: Pantothenate synthetase (286 aa).

Position 30 to 37 (30 to 37 (MGNLHRGH)) interacts with ATP. Histidine 37 acts as the Proton donor in catalysis. Residue glutamine 61 coordinates (R)-pantoate. Glutamine 61 contributes to the beta-alanine binding site. 149–152 (GEKD) is an ATP binding site. Residue glutamine 155 coordinates (R)-pantoate. Residues valine 178 and 186-189 (LSSR) contribute to the ATP site.

Belongs to the pantothenate synthetase family. In terms of assembly, homodimer.

It is found in the cytoplasm. The catalysed reaction is (R)-pantoate + beta-alanine + ATP = (R)-pantothenate + AMP + diphosphate + H(+). It functions in the pathway cofactor biosynthesis; (R)-pantothenate biosynthesis; (R)-pantothenate from (R)-pantoate and beta-alanine: step 1/1. In terms of biological role, catalyzes the condensation of pantoate with beta-alanine in an ATP-dependent reaction via a pantoyl-adenylate intermediate. This chain is Pantothenate synthetase, found in Nitrosococcus oceani (strain ATCC 19707 / BCRC 17464 / JCM 30415 / NCIMB 11848 / C-107).